A 437-amino-acid chain; its full sequence is Vacuolar protein sorting-associated protein 4A (437 aa).

An interaction with CHMP1B region spans residues Met-1 to Pro-84. Residues Thr-2–His-80 form the MIT domain. Lys-8 is subject to N6-acetyllysine. The segment at Arg-75 to Lys-106 is disordered. Basic and acidic residues predominate over residues Pro-84–Asp-96. A phosphoserine mark is found at Ser-95 and Ser-97. Residue Gly-167–Ser-174 participates in ATP binding.

This sequence belongs to the AAA ATPase family. In terms of assembly, proposed to be monomeric or homodimeric in nucleotide-free form and to oligomerize upon binding to ATP to form two stacked hexameric or heptameric rings with a central pore through which ESCRT-III substrates are translocated in an ATP-dependent manner. Interacts with CHMP1A, CHMP1B, CHMP2A, CHMP2B, CHMP3, CHMP4A, CHMP4B, CHMP4C and CHMP6. Interacts with VPS4B; the interaction suggests a heteromeric assembly with VPS4B. Interacts with SPAST. Interacts with IST1. Interacts with ZFYVE19/ANCHR; leading to retain it at midbody. As to expression, ubiquitously expressed.

It localises to the late endosome membrane. It is found in the midbody. The protein localises to the cytoplasm. Its subcellular location is the cytoskeleton. The protein resides in the spindle. It carries out the reaction ATP + H2O = ADP + phosphate + H(+). Functionally, involved in late steps of the endosomal multivesicular bodies (MVB) pathway. Recognizes membrane-associated ESCRT-III assemblies and catalyzes their disassembly, possibly in combination with membrane fission. Redistributes the ESCRT-III components to the cytoplasm for further rounds of MVB sorting. MVBs contain intraluminal vesicles (ILVs) that are generated by invagination and scission from the limiting membrane of the endosome and mostly are delivered to lysosomes enabling degradation of membrane proteins, such as stimulated growth factor receptors, lysosomal enzymes and lipids. It is required for proper accomplishment of various processes including the regulation of endosome size, primary cilium organization, mitotic spindle organization, chromosome segregation, and nuclear envelope sealing and spindle disassembly during anaphase. Involved in cytokinesis: retained at the midbody by ZFYVE19/ANCHR and CHMP4C until abscission checkpoint signaling is terminated at late cytokinesis. It is then released following dephosphorylation of CHMP4C, leading to abscission. VPS4A/B are required for the exosomal release of SDCBP, CD63 and syndecan. Critical for normal erythroblast cytokinesis and correct erythropoiesis. (Microbial infection) In conjunction with the ESCRT machinery also appears to function in topologically equivalent membrane fission events, such as the terminal stages of cytokinesis and enveloped virus budding (HIV-1 and other lentiviruses). The sequence is that of Vacuolar protein sorting-associated protein 4A from Homo sapiens (Human).